A 114-amino-acid polypeptide reads, in one-letter code: Class I hydrophobin 6 (114 aa).

The signal sequence occupies residues 1 to 19 (MLFKQLILVATALTTLAVA). Disulfide bonds link Cys-33-Cys-93, Cys-40-Cys-87, Cys-41-Cys-74, and Cys-94-Cys-107. N-linked (GlcNAc...) asparagine glycosylation occurs at Asn-42.

Belongs to the fungal hydrophobin family. Self-assembles to form functional amyloid fibrils called rodlets. Self-assembly into fibrillar rodlets occurs spontaneously at hydrophobic:hydrophilic interfaces and the rodlets further associate laterally to form amphipathic monolayers.

It localises to the secreted. The protein resides in the cell wall. Its function is as follows. Aerial growth, conidiation, and dispersal of filamentous fungi in the environment rely upon a capability of their secreting small amphipathic proteins called hydrophobins (HPBs) with low sequence identity. Class I can self-assemble into an outermost layer of rodlet bundles on aerial cell surfaces, conferring cellular hydrophobicity that supports fungal growth, development and dispersal; whereas Class II form highly ordered films at water-air interfaces through intermolecular interactions but contribute nothing to the rodlet structure. In Pleurotus ostreatus (strain PC15) (Oyster mushroom), this protein is Class I hydrophobin 6.